The primary structure comprises 342 residues: C-X-C chemokine receptor type 6 (342 aa).

Residues 1–32 (MAEYDHYEDNGFNSFNDSSQEEHQDFLQFSKV) lie on the Extracellular side of the membrane. N16 carries N-linked (GlcNAc...) asparagine glycosylation. The helical transmembrane segment at 33–59 (FLPCMYLVVFVCGLVGNSLVLVISIFY) threads the bilayer. The Cytoplasmic portion of the chain corresponds to 60–68 (HKLQSLTDV). The chain crosses the membrane as a helical span at residues 69–89 (FLVNLPLADLVFVCTLPFWAY). The Extracellular portion of the chain corresponds to 90–103 (AGIHEWIFGQVMCK). Residues C102 and C180 are joined by a disulfide bond. Residues 104-125 (TLLGIYTINFYTSMLILTCITV) form a helical membrane-spanning segment. At 126–143 (DRFIVVVKATKAYNQQAK) the chain is on the cytoplasmic side. The helical transmembrane segment at 144–164 (KMTWGKVICLLIWVISLLVSL) threads the bilayer. The Extracellular portion of the chain corresponds to 165–187 (PQIIYGNVFNLDKLICGYHDEEI). A helical transmembrane segment spans residues 188–215 (STVVLATQMTLGFFLPLLAMIVCYSVII). Residues 216–231 (KTLLHAGGFQKHRSLK) are Cytoplasmic-facing. Residues 232–259 (IIFLVMAVFLLTQTPFNLVKLIRSTHWE) traverse the membrane as a helical segment. The Extracellular portion of the chain corresponds to 260–275 (YYAMTSFHYTIIVTEA). Residues 276-293 (IAYLRACLNPVLYAFVSL) form a helical membrane-spanning segment. At 294 to 342 (KFRKNFWKLVKDIGCLPYLGVSHQWKSSEDNSKTFSASHNVEATSMFQL) the chain is on the cytoplasmic side.

The protein belongs to the G-protein coupled receptor 1 family.

It localises to the cell membrane. Its function is as follows. Receptor for the C-X-C chemokine CXCL16. Used as a coreceptor by SIVs and by strains of HIV-2 and m-tropic HIV-1. This is C-X-C chemokine receptor type 6 (CXCR6) from Chlorocebus aethiops (Green monkey).